Consider the following 258-residue polypeptide: Trifolitoxin-processing protein TfxF (258 aa).

Functionally, the actions of the proteins TfxB, TfxD and TfxF are implicated in the processing of the inactive trifolitoxin (TfxA) precursor into the active peptide. The sequence is that of Trifolitoxin-processing protein TfxF (tfxF) from Rhizobium leguminosarum bv. trifolii.